The following is a 165-amino-acid chain: 3-hydroxyacyl-[acyl-carrier-protein] dehydratase FabZ (165 aa).

His-64 is a catalytic residue.

The protein belongs to the thioester dehydratase family. FabZ subfamily.

It is found in the cytoplasm. The catalysed reaction is a (3R)-hydroxyacyl-[ACP] = a (2E)-enoyl-[ACP] + H2O. In terms of biological role, involved in unsaturated fatty acids biosynthesis. Catalyzes the dehydration of short chain beta-hydroxyacyl-ACPs and long chain saturated and unsaturated beta-hydroxyacyl-ACPs. This chain is 3-hydroxyacyl-[acyl-carrier-protein] dehydratase FabZ, found in Acidiphilium cryptum (strain JF-5).